The primary structure comprises 286 residues: Probable alpha-ketoglutarate-dependent hypophosphite dioxygenase (286 aa).

Belongs to the PhyH family.

In terms of biological role, required for hypophosphite oxidation. The chain is Probable alpha-ketoglutarate-dependent hypophosphite dioxygenase (htxA) from Stutzerimonas stutzeri (Pseudomonas stutzeri).